The primary structure comprises 100 residues: Large ribosomal subunit protein eL30 (100 aa).

It belongs to the eukaryotic ribosomal protein eL30 family.

The protein is Large ribosomal subunit protein eL30 of Thermococcus sibiricus (strain DSM 12597 / MM 739).